The sequence spans 349 residues: Very-long-chain 3-oxoacyl-CoA reductase (349 aa).

A helical transmembrane segment spans residues 29–49 (AASLVFATGGLFLLSRGLSFL). 8 residues coordinate NADP(+): L74, D129, D137, N156, Y223, K227, V256, and S258. Y223 (proton donor) is an active-site residue. Catalysis depends on K227, which acts as the Lowers pKa of active site Tyr.

This sequence belongs to the short-chain dehydrogenases/reductases (SDR) family.

It localises to the endoplasmic reticulum membrane. The enzyme catalyses a very-long-chain (3R)-3-hydroxyacyl-CoA + NADP(+) = a very-long-chain 3-oxoacyl-CoA + NADPH + H(+). It participates in lipid metabolism; fatty acid biosynthesis. Functionally, component of the microsomal membrane bound fatty acid elongation system, which produces the 26-carbon very long-chain fatty acids (VLCFA) from palmitate. Catalyzes the reduction of the 3-ketoacyl-CoA intermediate that is formed in each cycle of fatty acid elongation. VLCFAs serve as precursors for ceramide and sphingolipids. This Coccidioides immitis (strain RS) (Valley fever fungus) protein is Very-long-chain 3-oxoacyl-CoA reductase.